Consider the following 474-residue polypeptide: tRNA modification GTPase MnmE (474 aa).

(6S)-5-formyl-5,6,7,8-tetrahydrofolate contacts are provided by Arg-23, Glu-86, and Lys-125. The region spanning 221 to 396 (GIPVAIVGEP…LKEKLLEYVN (176 aa)) is the TrmE-type G domain. Residue Asn-231 coordinates K(+). GTP is bound by residues 231 to 236 (NVGKST), 250 to 256 (SEIAGTT), and 275 to 278 (DTAG). Residue Ser-235 participates in Mg(2+) binding. Ser-250, Ile-252, and Thr-255 together coordinate K(+). Thr-256 is a binding site for Mg(2+). Lys-474 serves as a coordination point for (6S)-5-formyl-5,6,7,8-tetrahydrofolate.

It belongs to the TRAFAC class TrmE-Era-EngA-EngB-Septin-like GTPase superfamily. TrmE GTPase family. As to quaternary structure, homodimer. Heterotetramer of two MnmE and two MnmG subunits. Requires K(+) as cofactor.

It is found in the cytoplasm. Its function is as follows. Exhibits a very high intrinsic GTPase hydrolysis rate. Involved in the addition of a carboxymethylaminomethyl (cmnm) group at the wobble position (U34) of certain tRNAs, forming tRNA-cmnm(5)s(2)U34. This is tRNA modification GTPase MnmE from Christiangramia forsetii (strain DSM 17595 / CGMCC 1.15422 / KT0803) (Gramella forsetii).